The sequence spans 227 residues: MASFRIRQFQERDYKQVVDVFSRGMEEHIPTAFRHLLTLPRTLLLLAVVPLAIVLVSGSWFLAVVCIFFLFLFLWFLASKPWKNYVSKCLHTDMADITKSYLSVRGSGFWVAESGGQVVGTVAARPVKDPPLGRKQLQLFRLSVSSQHRGQGIAKALTRTVLQFARDQGYSDVVLVTGLLQQGAVTLYYSMGFQKTGESFVDILTWLVDVSLIHFIYPLPSAQKYEL.

Residues 1–35 (MASFRIRQFQERDYKQVVDVFSRGMEEHIPTAFRH) lie on the Cytoplasmic side of the membrane. A helical; Signal-anchor for type II membrane protein membrane pass occupies residues 36 to 56 (LLTLPRTLLLLAVVPLAIVLV). Residues 57 to 227 (SGSWFLAVVC…PLPSAQKYEL (171 aa)) lie on the Lumenal side of the membrane. Positions 69–217 (FLFLFLWFLA…VDVSLIHFIY (149 aa)) constitute an N-acetyltransferase domain.

It belongs to the NAT8 family. In terms of tissue distribution, expressed in brain (at protein level).

Its subcellular location is the endoplasmic reticulum-Golgi intermediate compartment membrane. It is found in the endoplasmic reticulum membrane. The enzyme catalyses L-lysyl-[protein] + acetyl-CoA = N(6)-acetyl-L-lysyl-[protein] + CoA + H(+). The catalysed reaction is an S-substituted L-cysteine + acetyl-CoA = an N-acetyl-L-cysteine-S-conjugate + CoA + H(+). It functions in the pathway sulfur metabolism; glutathione metabolism. Its function is as follows. Endoplasmic reticulum (ER)-membrane-bound lysine N-acetyltransferase catalyzing the N6-acetylation of lysine residues in the lumen of the ER in various proteins, including PROM1 and BACE1, using acetyl-CoA as acetyl donor. Thereby, may regulate apoptosis through the acetylation and the regulation of the expression of PROM1. May also regulate amyloid beta-peptide secretion through acetylation of BACE1 and the regulation of its expression in neurons. N(6)-lysine acetylation in the ER maintains protein homeostasis and regulates reticulophagy. Alternatively, acetylates the free alpha-amino group of cysteine S-conjugates to form mercapturic acids. This is the final step in a major route for detoxification of a wide variety of reactive electrophiles which starts with their incorporation into glutathione S-conjugates. The glutathione S-conjugates are then further processed into cysteine S-conjugates and finally mercapturic acids which are water soluble and can be readily excreted in urine or bile. This chain is N-acetyltransferase 8 (Nat8), found in Mus musculus (Mouse).